A 453-amino-acid chain; its full sequence is Carbamoyl phosphate synthase arginine-specific small chain (453 aa).

Residues Met-1–Gly-33 constitute a mitochondrion transit peptide. A disordered region spans residues Leu-26–Ala-50. Ser-97, Gly-280, and Gly-282 together coordinate L-glutamine. A Glutamine amidotransferase type-1 domain is found at His-233–Asn-420. The Nucleophile role is filled by Cys-309. L-glutamine contacts are provided by Leu-310, Gln-313, Asn-351, Gly-353, and Tyr-354. Active-site residues include His-393 and Glu-395.

This sequence belongs to the CarA family. In terms of assembly, heterodimer composed of 2 chains; the small (or glutamine) chain promotes the hydrolysis of glutamine to ammonia, which is used by the large (or ammonia) chain to synthesize carbamoyl phosphate.

It localises to the mitochondrion matrix. It catalyses the reaction hydrogencarbonate + L-glutamine + 2 ATP + H2O = carbamoyl phosphate + L-glutamate + 2 ADP + phosphate + 2 H(+). The enzyme catalyses L-glutamine + H2O = L-glutamate + NH4(+). The protein operates within amino-acid biosynthesis; L-arginine biosynthesis; carbamoyl phosphate from bicarbonate: step 1/1. In terms of biological role, small subunit of the arginine-specific carbamoyl phosphate synthase (CPSase). CPSase catalyzes the formation of carbamoyl phosphate from the ammonia moiety of glutamine, carbonate, and phosphate donated by ATP, the first step of the arginine biosynthetic pathway. The small subunit (glutamine amidotransferase) binds and cleaves glutamine to supply the large subunit with the substrate ammonia. The chain is Carbamoyl phosphate synthase arginine-specific small chain (arg-2) from Neurospora crassa (strain ATCC 24698 / 74-OR23-1A / CBS 708.71 / DSM 1257 / FGSC 987).